The following is a 254-amino-acid chain: MTLEKILREKKKDKDILLMTHIVLGYPSFAANREVIEQMVKNGVDCIEMQIPFSEPMADGPVILKANQESLARGTRVAQCFDFAREMTRKHQIPFLFMTYYNIVFKYGEERFFQDAKEAGIKGLIVPDLPPEMGEDYFAYAEQYQLAPIIIYAPTSTPERMKTLAGSATGFIYCAARRGVTGNNSALDENFDNYLSNCRAATTLPLAVGFGIKSKADVQALIGKADMAVIGSQTIRLVDENGPKAVGPFVASLR.

Residues glutamate 48 and aspartate 59 each act as proton acceptor in the active site.

Belongs to the TrpA family. In terms of assembly, tetramer of two alpha and two beta chains.

It catalyses the reaction (1S,2R)-1-C-(indol-3-yl)glycerol 3-phosphate + L-serine = D-glyceraldehyde 3-phosphate + L-tryptophan + H2O. It participates in amino-acid biosynthesis; L-tryptophan biosynthesis; L-tryptophan from chorismate: step 5/5. In terms of biological role, the alpha subunit is responsible for the aldol cleavage of indoleglycerol phosphate to indole and glyceraldehyde 3-phosphate. This Desulfotalea psychrophila (strain LSv54 / DSM 12343) protein is Tryptophan synthase alpha chain.